A 1493-amino-acid polypeptide reads, in one-letter code: ABC transporter C family member 7 (1493 aa).

A run of 10 helical transmembrane segments spans residues 21-41, 70-90, 102-122, 140-160, 165-185, 309-329, 343-360, 423-443, 448-468, and 535-555; these read FPMFSIFFNLLLLLVMFGSCV, VVICCETLSALNSVLLLLSCF, LMILLDLLFTALSWGAISFYI, VWWVLYFMFSCYRLLVDIALY, LVSVHLLLSDVLAVSVGLFLC, ILLSTLFAFVYTVSCYVAPYL, YSNQGVVLVTTFFVAKLV, WYMHDPWILVLQISLALLILY, LGSIAAFAATFLVMLGNIPLA, and SVLWAAPSFVSATAFGACMLL. The ABC transmembrane type-1 1 domain maps to 309–590; the sequence is ILLSTLFAFV…LPDTISMIVQ (282 aa). Residues 624 to 847 enclose the ABC transporter 1 domain; sequence VEVSNGAFSW…GTDFMELVGA (224 aa). 659-666 contacts ATP; that stretch reads GTVGSGKS. Positions 863–898 are disordered; that stretch reads ASAQSTTSKESKVSNDEEKQEEDLPSPKGQLVQEEE. Serine 888 carries the phosphoserine modification. The next 6 helical transmembrane spans lie at 915-935, 959-979, 1038-1055, 1059-1081, 1153-1173, and 1177-1197; these read LAYGGALVPIILVVQILFQVL, GSTLILVYVFLATASSFCILV, FSNLAIAAVNILGIIGVM, AWQVLIVFIPVIAACTWYRQYYI, LSTVAFALSLVILVSVPEGVI, and FAGLAVTYALNLNSLQATLIW. The 283-residue stretch at 922–1204 folds into the ABC transmembrane type-1 2 domain; the sequence is VPIILVVQIL…LIWTLCDLEN (283 aa). Residues 1241–1475 enclose the ABC transporter 2 domain; it reads ITICNLQVRY…KSSSFSKLVA (235 aa). Residue 1275-1282 participates in ATP binding; the sequence is GRTGCGKS.

This sequence belongs to the ABC transporter superfamily. ABCC family. Conjugate transporter (TC 3.A.1.208) subfamily. In terms of tissue distribution, ubiquitous.

It localises to the membrane. The catalysed reaction is ATP + H2O + xenobioticSide 1 = ADP + phosphate + xenobioticSide 2.. Its function is as follows. Pump for glutathione S-conjugates. This is ABC transporter C family member 7 (ABCC7) from Arabidopsis thaliana (Mouse-ear cress).